Reading from the N-terminus, the 395-residue chain is Probable L-tyrosine/L-aspartate decarboxylase (395 aa).

K242 bears the N6-(pyridoxal phosphate)lysine mark.

Belongs to the group II decarboxylase family. MfnA subfamily. Requires pyridoxal 5'-phosphate as cofactor.

It carries out the reaction L-tyrosine + H(+) = tyramine + CO2. It catalyses the reaction L-aspartate + H(+) = beta-alanine + CO2. The protein operates within cofactor biosynthesis; methanofuran biosynthesis. Its pathway is cofactor biosynthesis; coenzyme A biosynthesis. Functionally, catalyzes the decarboxylation of L-tyrosine to produce tyramine for methanofuran biosynthesis. Can also catalyze the decarboxylation of L-aspartate to produce beta-alanine for coenzyme A (CoA) biosynthesis. The chain is Probable L-tyrosine/L-aspartate decarboxylase from Methanosarcina barkeri (strain Fusaro / DSM 804).